The sequence spans 163 residues: Ribonuclease P protein subunit p25-like protein (163 aa).

Disordered stretches follow at residues 1-22 (MEHY…PQLP) and 129-163 (NECG…DTRS). The span at 143 to 152 (GSMPSSSCGP) shows a compositional bias: low complexity. A compositionally biased stretch (basic residues) spans 153-163 (RSRRRARDTRS).

It belongs to the histone-like Alba family.

Its subcellular location is the nucleus. May be a component of ribonuclease P or MRP. The polypeptide is Ribonuclease P protein subunit p25-like protein (RPP25L) (Homo sapiens (Human)).